A 380-amino-acid polypeptide reads, in one-letter code: Cytochrome b (380 aa).

Helical transmembrane passes span 34–54 (FGSL…LLAA), 78–99 (WLIR…YLHI), 114–134 (WNTG…GYVL), and 179–199 (FFTL…IHLT). Heme b contacts are provided by His84 and His98. Heme b contacts are provided by His183 and His197. His202 contributes to the a ubiquinone binding site. 4 consecutive transmembrane segments (helical) span residues 227–247 (LKDI…ALFS), 289–309 (LGGV…PLLH), 321–341 (FSQL…WVGS), and 348–368 (FIII…ILFP).

Belongs to the cytochrome b family. As to quaternary structure, the cytochrome bc1 complex contains 11 subunits: 3 respiratory subunits (MT-CYB, CYC1 and UQCRFS1), 2 core proteins (UQCRC1 and UQCRC2) and 6 low-molecular weight proteins (UQCRH/QCR6, UQCRB/QCR7, UQCRQ/QCR8, UQCR10/QCR9, UQCR11/QCR10 and a cleavage product of UQCRFS1). This cytochrome bc1 complex then forms a dimer. Heme b is required as a cofactor.

It is found in the mitochondrion inner membrane. Component of the ubiquinol-cytochrome c reductase complex (complex III or cytochrome b-c1 complex) that is part of the mitochondrial respiratory chain. The b-c1 complex mediates electron transfer from ubiquinol to cytochrome c. Contributes to the generation of a proton gradient across the mitochondrial membrane that is then used for ATP synthesis. This is Cytochrome b (MT-CYB) from Antigone rubicunda (Brolga crane).